The chain runs to 181 residues: Probable calcium-binding protein CML16 (181 aa).

A disordered region spans residues 1-24 (MSNTTEKKMPQQQQVERPTALAPA). 4 consecutive EF-hand domains span residues 23–58 (PADA…IAPP), 63–98 (AGGR…GRGD), 100–135 (EHEA…IGEG), and 136–171 (CSAE…DAAA). The Ca(2+) site is built by aspartate 36, aspartate 38, aspartate 40, arginine 42, glutamate 47, aspartate 76, aspartate 78, aspartate 80, glutamate 87, aspartate 113, aspartate 115, aspartate 117, arginine 119, glutamate 124, aspartate 149, aspartate 151, aspartate 153, cysteine 155, and glutamate 160.

In terms of biological role, potential calcium sensor. This Oryza sativa subsp. japonica (Rice) protein is Probable calcium-binding protein CML16 (CML16).